A 486-amino-acid chain; its full sequence is Galactose-1-phosphate uridylyltransferase (486 aa).

Belongs to the galactose-1-phosphate uridylyltransferase type 2 family.

The protein resides in the cytoplasm. It carries out the reaction alpha-D-galactose 1-phosphate + UDP-alpha-D-glucose = alpha-D-glucose 1-phosphate + UDP-alpha-D-galactose. It functions in the pathway carbohydrate metabolism; galactose metabolism. The protein is Galactose-1-phosphate uridylyltransferase of Lacticaseibacillus casei (strain BL23) (Lactobacillus casei).